Here is a 153-residue protein sequence, read N- to C-terminus: Endoribonuclease YbeY (153 aa).

3 residues coordinate Zn(2+): His-116, His-120, and His-126.

It belongs to the endoribonuclease YbeY family. Zn(2+) is required as a cofactor.

Its subcellular location is the cytoplasm. Its function is as follows. Single strand-specific metallo-endoribonuclease involved in late-stage 70S ribosome quality control and in maturation of the 3' terminus of the 16S rRNA. This chain is Endoribonuclease YbeY, found in Paraburkholderia phytofirmans (strain DSM 17436 / LMG 22146 / PsJN) (Burkholderia phytofirmans).